The primary structure comprises 127 residues: Protein LLP homolog (127 aa).

Over residues 1 to 21 the composition is skewed to basic residues; that stretch reads MAKSLRSKWKRKMRAEKRKKN. Positions 1 to 24 are disordered; it reads MAKSLRSKWKRKMRAEKRKKNAPK. Glycyl lysine isopeptide (Lys-Gly) (interchain with G-Cter in SUMO2) cross-links involve residues Lys65 and Lys72. Residues 98–120 are compositionally biased toward basic residues; it reads RQRKRLKAKRERKKGKSKVKAMK. The tract at residues 98–127 is disordered; it reads RQRKRLKAKRERKKGKSKVKAMKAAKGLTW.

It belongs to the learning-associated protein family. In terms of assembly, interacts with CTCF, MYO1C and with the transcriptional machinery, including RNA polymerase II and TBP.

It is found in the nucleus. Its subcellular location is the nucleolus. The protein localises to the chromosome. In hippocampal neurons, regulates dendritic and spine growth and synaptic transmission. This is Protein LLP homolog (LLPH) from Bos taurus (Bovine).